The sequence spans 163 residues: Putative NOL1/NOP2/Sun domain family member 5B (163 aa).

The active-site Nucleophile is the Cys93.

It belongs to the class I-like SAM-binding methyltransferase superfamily. RsmB/NOP family. Ubiquitous.

The polypeptide is Putative NOL1/NOP2/Sun domain family member 5B (NSUN5P1) (Homo sapiens (Human)).